Consider the following 195-residue polypeptide: PAP fimbrial minor pilin protein (195 aa).

Residues 1-22 (MRLRFSVPLFFFGCVFVHGVFA) form the signal peptide. The cysteines at positions 58 and 97 are disulfide-linked.

It belongs to the fimbrial protein family.

The protein localises to the secreted. Its subcellular location is the fimbrium. In terms of biological role, fimbriae (also called pili), polar filaments radiating from the surface of the bacterium to a length of 0.5-1.5 micrometers and numbering 100-300 per cell, enable bacteria to colonize the epithelium of specific host organs. Functionally, papH seems to anchor the pilus to the bacterial cell. In addition the stoichiometric relationship between PapH and PapA determines the pilus length. This chain is PAP fimbrial minor pilin protein (papH), found in Escherichia coli.